The sequence spans 410 residues: Arginine deiminase (410 aa).

The active-site Amidino-cysteine intermediate is the Cys-400.

The protein belongs to the arginine deiminase family.

The protein resides in the cytoplasm. It carries out the reaction L-arginine + H2O = L-citrulline + NH4(+). Its pathway is amino-acid degradation; L-arginine degradation via ADI pathway; carbamoyl phosphate from L-arginine: step 1/2. This Lactococcus lactis subsp. lactis (strain IL1403) (Streptococcus lactis) protein is Arginine deiminase (arcA).